Consider the following 373-residue polypeptide: Core trichothecene cluster (CTC) protein 14 (373 aa).

Belongs to the TRI14 family.

Its function is as follows. Part of the core gene cluster that mediates the biosynthesis of trichothecenes, a very large family of chemically related bicyclic sesquiterpene compounds acting as mycotoxins, including T2-toxin. The biosynthesis of trichothecenes begins with the cyclization of farnesyl diphosphate to trichodiene and is catalyzed by the trichodiene synthase TRI5. Trichodiene undergoes a series of oxygenations catalyzed by the cytochrome P450 monooxygenase TRI4. TRI4 controls the addition of four oxygens at C-2, C-3, C-11, and the C-12, C-13-epoxide to form the intermediate isotrichotriol. Isotrichotriol then undergoes a non-enzymatic isomerization and cyclization to form isotrichodermol. During this process, the oxygen at the C-2 position becomes the pyran ring oxygen and the hydroxyl group at C-11 is lost. More complex type A trichothecenes are built by modifying isotrichodermol through a series of paired hydroxylation and acetylation or acylation steps. Isotrichodermol is converted to isotrichodermin by the acetyltransferase TRI101. TRI101 encodes a C-3 transacetylase that acts as a self-protection or resistance factor during biosynthesis and that the presence of a free C-3 hydroxyl group is a key component of Fusarium trichothecene phytotoxicity. A second hydroxyl group is added to C-15 by the trichothecene C-15 hydroxylase TRI11, producing 15-decalonectrin, which is then acetylated by TRI3, producing calonectrin. A third hydroxyl group is added at C-4 by the cytochrome P450 monooxygenase TRI13, converting calonectrin to 3,15-diacetoxyspirpenol, which is subsequently acetylated bythe acetyltransferase TRI7. A fourth hydroxyl group is added to C-8 by the cytochrome P450 monooxygenase TRI1, followed by the addition of an isovaleryl moiety by TRI16. Finally, the acetyl group is removed from the C-3 position by the trichothecene C-3 esterase TRI8 to produce T-2 toxin. In Fusarium sporotrichioides, this protein is Core trichothecene cluster (CTC) protein 14.